The primary structure comprises 122 residues: Large ribosomal subunit protein uL14 (122 aa).

It belongs to the universal ribosomal protein uL14 family. As to quaternary structure, part of the 50S ribosomal subunit. Forms a cluster with proteins L3 and L19. In the 70S ribosome, L14 and L19 interact and together make contacts with the 16S rRNA in bridges B5 and B8.

Its function is as follows. Binds to 23S rRNA. Forms part of two intersubunit bridges in the 70S ribosome. The chain is Large ribosomal subunit protein uL14 from Nitrosospira multiformis (strain ATCC 25196 / NCIMB 11849 / C 71).